A 170-amino-acid polypeptide reads, in one-letter code: MQRGALRGASPTARRRLVDRPGLTEDEIEEIREAFNLFDTDGSGMIDPKELKAAMQSLGFETKNPTIYQMIADLDRDSGGPIDFEEFLDAITAKLGDKESREGIQKIFSLFDDDRTGTITLKNLKRVAKELGETMSEDELREMLERADSNGDGEISFEDFYAIMTKKTFP.

The segment at 1–21 (MQRGALRGASPTARRRLVDRP) is disordered. EF-hand domains lie at 26–61 (DEIE…LGFE), 62–97 (TKNP…KLGD), 99–134 (ESRE…LGET), and 135–170 (MSED…KTFP). Residues aspartate 39, aspartate 41, serine 43, methionine 45, and glutamate 50 each coordinate Ca(2+).

This sequence belongs to the centrin family. Monomer. Does not homooligomerize.

The protein localises to the cytoplasm. It is found in the cytoskeleton. Its subcellular location is the microtubule organizing center. It localises to the centrosome. In tachyzoites, plays an essential role in microneme secretion that ensures parasite motility and attachment to, invasion of and egress from host cells. Also involved in the architecture of the peripheral annuli where it appears to regulate the localization of PAP2. In association with the myosin motor MyoJ, involved in the constriction of the basal complex at the end of daughter cell division in an actin-dependent manner; the basal complex is a cytoskeletal structure formed at the tachyzoite basal pole during daughter cell formation. May be involved in parasite replication. In Toxoplasma gondii (strain ATCC 50611 / Me49), this protein is Centrin-2.